A 369-amino-acid chain; its full sequence is Protein RecA (369 aa).

An ATP-binding site is contributed by 66–73 (GPESSGKT). The segment at 328–369 (GIDAESLEEKEDPEKVKEQRAKKAAPGEEKPAEPASPEKTDK) is disordered. A compositionally biased stretch (basic and acidic residues) spans 339–369 (DPEKVKEQRAKKAAPGEEKPAEPASPEKTDK).

The protein belongs to the RecA family.

The protein resides in the cytoplasm. Functionally, can catalyze the hydrolysis of ATP in the presence of single-stranded DNA, the ATP-dependent uptake of single-stranded DNA by duplex DNA, and the ATP-dependent hybridization of homologous single-stranded DNAs. It interacts with LexA causing its activation and leading to its autocatalytic cleavage. The chain is Protein RecA from Lactobacillus delbrueckii subsp. bulgaricus (strain ATCC BAA-365 / Lb-18).